Consider the following 1000-residue polypeptide: ATP-dependent DNA/RNA helicase DHX36 (1000 aa).

The required for recruitment to cytoplasmic stress granules stretch occupies residues 1–43 (MSYDYHQSWSRDGGPRGSGQGSGGGGGGSRGSGGGGGGRGGRG). Positions 1–53 (MSYDYHQSWSRDGGPRGSGQGSGGGGGGSRGSGGGGGGRGGRGRHPAHLKGRE) are disordered. The required for the pre-miR-134 transport stretch occupies residues 1 to 96 (MSYDYHQSWS…IVQLLNSVQA (96 aa)). The interval 1 to 192 (MSYDYHQSWS…KKTDPRYIEM (192 aa)) is necessary for nuclear and nucleolar caps localizations. Gly residues predominate over residues 15–40 (PRGSGQGSGGGGGGSRGSGGGGGGRG). The tract at residues 45–67 (HPAHLKGREIGLWYAKKQTQKNK) is DSM (DHX36-specific motif). Residues 45 to 97 (HPAHLKGREIGLWYAKKQTQKNKEAERQERAVVHMDERREEQIVQLLNSVQAK) form a required for G4-DNA- and G4-RNA-binding region. RecA-like domain regions lie at residues 98 to 378 (NDKD…MIHI) and 379 to 620 (PGFT…DYQL). S153 carries the phosphoserine modification. A Helicase ATP-binding domain is found at 209–379 (VNLINNHQVT…FGNCPMIHIP (171 aa)). 225 to 230 (GCGKTT) contacts ATP. The segment at 257–309 (RRISAISVAERVAAERAESCGNGNSTGYQIRLQSRLPRKQGSILYCTTGIILQ) is necessary for interaction with single-stranded DNA at the 3'-end of the G4-DNA structure. The short motif at 326–329 (DEIH) is the DEAH box element. Residues E327 and H329 each contribute to the Mg(2+) site. The 171-residue stretch at 469–639 (ALIRYIVLEE…ELCLQIKILR (171 aa)) folds into the Helicase C-terminal domain. Positions 490 to 549 (WDNISTLHDLLMSQVMFKSDRFLIIPLHSLMPTVNQTQVFKKTPPGVRKIVIATNIAETS) are necessary for interaction with single-stranded DNA at the 3'-end of the G4-DNA structure. Positions 509–520 (DRFLIIPLHSLM) match the Nuclear localization signal motif. ATP-binding positions include S549 and 594-597 (RAGR). The WH domain stretch occupies residues 621-690 (PEILRTPLEE…LGVHLARLPV (70 aa)). Necessary for interaction with single-stranded DNA at the 3'-end of the G4-DNA structure stretches follow at residues 630–689 (ELCL…ARLP), 841–852 (NLGKKRKMVKVH), and 862–892 (HPKSVNVEQTDFHYNWLIYHLKMRTSSIYLY). An OB-fold-like subdomains region spans residues 833 to 897 (PKVAKIRLNL…SIYLYDCTEV (65 aa)). Position 939 is an N6-acetyllysine (K939).

As to quaternary structure, found in a multi-helicase-TICAM1 complex at least composed of DHX36, DDX1, DDX21 and TICAM1; this complex exists in resting cells with or without dsRNA poly(I:C) ligand stimulation. Interacts (via C-terminus) with TICAM1 (via TIR domain). Interacts (via C-terminus) with DDX21; this interaction serves as bridges to TICAM1. Interacts with TERT; this interaction is dependent on the ability of DHX36 to bind to the G-quadruplex RNA (G4-RNA) structure present in the telomerase RNA template component (TERC). Interacts with DKC1; this interaction is dependent on the ability of DHX36 to bind to the G4-RNA structure present in TERC. Interacts with PARN; this interaction stimulates PARN to enhance uPA mRNA decay. Interacts with EXOSC3; this interaction occurs in a RNase-insensitive manner. Interacts with EXOSC10; this interaction occurs in a RNase-insensitive manner. Interacts with ILF3; this interaction occurs in a RNA-dependent manner. Interacts with ELAVL1; this interaction occurs in an RNA-dependent manner. Interacts with DDX5; this interaction occurs in a RNA-dependent manner. Interacts with DDX17; this interaction occurs in a RNA-dependent manner. Interacts with HDAC1; this interaction occurs in a RNA-dependent manner. Interacts with HDAC3; this interaction occurs in a RNA-dependent manner. Interacts with HDAC4. Interacts with AGO1. Interacts with AGO2. Interacts with ERCC6. Requires Mg(2+) as cofactor.

It localises to the nucleus. It is found in the cytoplasm. Its subcellular location is the cytosol. The protein resides in the stress granule. The protein localises to the nucleus speckle. It localises to the chromosome. It is found in the telomere. Its subcellular location is the mitochondrion. The protein resides in the perikaryon. The protein localises to the cell projection. It localises to the dendrite. It is found in the axon. The catalysed reaction is ATP + H2O = ADP + phosphate + H(+). Its activity is regulated as follows. ATPase activity is enhanced in the presence of homomeric poly(U) RNAs, but not by double-stranded DNA (dsDNA), double-stranded RNA (dsRNA) and tRNA. Functionally, multifunctional ATP-dependent helicase that unwinds G-quadruplex (G4) structures. Plays a role in many biological processes such as genomic integrity, gene expression regulations and as a sensor to initiate antiviral responses. G4 structures correspond to helical structures containing guanine tetrads. Binds with high affinity to and unwinds G4 structures that are formed in nucleic acids (G4-DNA and G4-RNA). Plays a role in genomic integrity. Converts the G4-RNA structure present in telomerase RNA template component (TREC) into a double-stranded RNA to promote P1 helix formation that acts as a template boundary ensuring accurate reverse transcription. Plays a role in transcriptional regulation. Resolves G4-DNA structures in promoters of genes, such as YY1, KIT/c-kit and ALPL and positively regulates their expression. Plays a role in post-transcriptional regulation. Unwinds a G4-RNA structure located in the 3'-UTR polyadenylation site of the pre-mRNA TP53 and stimulates TP53 pre-mRNA 3'-end processing in response to ultraviolet (UV)-induced DNA damage. Binds to the precursor-microRNA-134 (pre-miR-134) terminal loop and regulates its transport into the synapto-dendritic compartment. Involved in the pre-miR-134-dependent inhibition of target gene expression and the control of dendritic spine size. Plays a role in the regulation of cytoplasmic mRNA translation and mRNA stability. Binds to both G4-RNA structures and alternative non-quadruplex-forming sequence within the 3'-UTR of the PITX1 mRNA regulating negatively PITX1 protein expression. Binds to both G4-RNA structure in the 5'-UTR and AU-rich elements (AREs) localized in the 3'-UTR of NKX2-5 mRNA to either stimulate protein translation or induce mRNA decay in an ELAVL1-dependent manner, respectively. Also binds to ARE sequences present in several mRNAs mediating exosome-mediated 3'-5' mRNA degradation. Involved in cytoplasmic urokinase-type plasminogen activator (uPA) mRNA decay. Component of a multi-helicase-TICAM1 complex that acts as a cytoplasmic sensor of viral double-stranded RNA (dsRNA) and plays a role in the activation of a cascade of antiviral responses including the induction of pro-inflammatory cytokines via the adapter molecule TICAM1. Required for the early embryonic development and hematopoiesis. Involved in the regulation of cardioblast differentiation and proliferation during heart development. Involved in spermatogonia differentiation. May play a role in ossification. This Rattus norvegicus (Rat) protein is ATP-dependent DNA/RNA helicase DHX36.